Here is a 175-residue protein sequence, read N- to C-terminus: MSDTINLTRRGFLKVSGSGVAVAATLSPIASANAQKAPADAGRTTLQYPATQVSVAKNLKANEPVSFTYPDTSSPCVAVKLGSPVPGGVGPNNDIVAYSVLCTHMGCPTSYDKSSKTFKCPCHFTEFDAEKAGQMICGQATENLPRVLLRYDEASDALTAVGVDGLIYGRQANVI.

The segment at residues 1–32 (MSDTINLTRRGFLKVSGSGVAVAATLSPIASA) is a signal peptide (tat-type signal). A Rieske domain is found at 62 to 158 (NEPVSFTYPD…LRYDEASDAL (97 aa)). [2Fe-2S] cluster-binding residues include Cys-102, His-104, Cys-120, and His-123. Cysteines 107 and 122 form a disulfide.

This sequence belongs to the AOX family. Heterodimer consisting of a large and a small subunit. [2Fe-2S] cluster is required as a cofactor. In terms of processing, predicted to be exported by the Tat system. The position of the signal peptide cleavage has not been experimentally proven.

It carries out the reaction 2 oxidized [azurin] + arsenite + H2O = 2 reduced [azurin] + arsenate + 3 H(+). Involved in the detoxification of arsenic. Oxidizes As(III)O3(3-) (arsenite) to the somewhat less toxic As(V)O4(3-) (arsenate). The chain is Arsenite oxidase subunit AioB (aioB) from Alcaligenes faecalis.